The sequence spans 254 residues: Homeobox protein Nkx-6.3 (254 aa).

Disordered regions lie at residues Gln112–Phe140 and Lys191–Ser228. Polar residues predominate over residues Ala120–Gly129. Positions Lys133–Ser192 form a DNA-binding region, homeobox.

The protein localises to the nucleus. Its function is as follows. Putative transcription factor, which may be involved in patterning of central nervous system and pancreas. This is Homeobox protein Nkx-6.3 (nkx6-3) from Xenopus laevis (African clawed frog).